The sequence spans 202 residues: Tetratricopeptide repeat protein 36 (202 aa).

TPR repeat units follow at residues 49–82, 83–116, and 121–154; these read AQDL…LPER, ASAY…SGIA, and RQAL…GSDF.

The protein belongs to the TTC36 family.

The sequence is that of Tetratricopeptide repeat protein 36 (ttc36) from Xenopus tropicalis (Western clawed frog).